A 222-amino-acid polypeptide reads, in one-letter code: Ribosomal RNA small subunit methyltransferase G (222 aa).

Residues Gly-73, Leu-78, 124–125 (AE), and Arg-137 contribute to the S-adenosyl-L-methionine site.

This sequence belongs to the methyltransferase superfamily. RNA methyltransferase RsmG family.

It localises to the cytoplasm. Functionally, specifically methylates the N7 position of guanine in position 518 of 16S rRNA. This chain is Ribosomal RNA small subunit methyltransferase G, found in Acidothermus cellulolyticus (strain ATCC 43068 / DSM 8971 / 11B).